The chain runs to 105 residues: Small ribosomal subunit protein uS10 (105 aa).

Belongs to the universal ribosomal protein uS10 family. In terms of assembly, part of the 30S ribosomal subunit.

Its function is as follows. Involved in the binding of tRNA to the ribosomes. The sequence is that of Small ribosomal subunit protein uS10 from Picosynechococcus sp. (strain ATCC 27264 / PCC 7002 / PR-6) (Agmenellum quadruplicatum).